Reading from the N-terminus, the 638-residue chain is Protein disulfide-isomerase A4 (638 aa).

The first 20 residues, 1–20 (MKLRKAWLLVLLLALTQLLA), serve as a signal peptide directing secretion. 2 Thioredoxin domains span residues 21 to 162 (AASA…EVSQ) and 162 to 294 (QPDW…EFLK). Residues 24 to 50 (AGDAHEDTSDTENATEEEEEEDDDDLE) are disordered. A compositionally biased stretch (acidic residues) spans 32-50 (SDTENATEEEEEEDDDDLE). A glycan (N-linked (GlcNAc...) asparagine) is linked at Asn36. The short motif at 84-87 (CGHC) is the CXXC element. 2 disulfides stabilise this stretch: Cys84–Cys87 and Cys199–Cys202. Lys359 carries the post-translational modification N6-acetyllysine. Positions 498–629 (FKKGKLKPVI…LSKFIDEHAT (132 aa)) constitute a Thioredoxin 3 domain. The CXXC signature appears at 548–551 (CGHC). Cys548 and Cys551 are oxidised to a cystine. The short motif at 635–638 (KEEL) is the Prevents secretion from ER element.

It belongs to the protein disulfide isomerase family. Part of a large chaperone multiprotein complex comprising DNAJB11, HSP90B1, HSPA5, HYOU, PDIA2, PDIA4, PDIA6, PPIB, SDF2L1, UGGT1 and very small amounts of ERP29, but not, or at very low levels, CALR nor CANX. Component of a complex containing at least CRELD2, MANF, MATN3 and PDIA4.

The protein resides in the endoplasmic reticulum lumen. Its subcellular location is the melanosome. The enzyme catalyses Catalyzes the rearrangement of -S-S- bonds in proteins.. The chain is Protein disulfide-isomerase A4 (Pdia4) from Mus musculus (Mouse).